A 286-amino-acid polypeptide reads, in one-letter code: Glycine--tRNA ligase alpha subunit (286 aa).

Belongs to the class-II aminoacyl-tRNA synthetase family. In terms of assembly, tetramer of two alpha and two beta subunits.

The protein resides in the cytoplasm. It carries out the reaction tRNA(Gly) + glycine + ATP = glycyl-tRNA(Gly) + AMP + diphosphate. The chain is Glycine--tRNA ligase alpha subunit from Thermotoga petrophila (strain ATCC BAA-488 / DSM 13995 / JCM 10881 / RKU-1).